The chain runs to 285 residues: Putative alkaline ceramidase dcd3B (285 aa).

3 helical membrane passes run 34–54 (TFSS…MMSA), 77–97 (VLFS…YHAT), and 104–124 (LFDE…ILTI). Asn-131 is a glycosylation site (N-linked (GlcNAc...) asparagine). 4 helical membrane-spanning segments follow: residues 141 to 161 (RFLP…ITII), 166 to 186 (IILQ…SYMY), 200 to 220 (PKKF…SWLT), and 236 to 256 (LHAV…QFFI).

This sequence belongs to the alkaline ceramidase family.

The protein localises to the membrane. This chain is Putative alkaline ceramidase dcd3B (dcd3B), found in Dictyostelium discoideum (Social amoeba).